We begin with the raw amino-acid sequence, 246 residues long: tRNA (guanine-N(1)-)-methyltransferase (246 aa).

S-adenosyl-L-methionine-binding positions include Gly-114 and 134–139 (IGDYIL).

Belongs to the RNA methyltransferase TrmD family. Homodimer.

It localises to the cytoplasm. The catalysed reaction is guanosine(37) in tRNA + S-adenosyl-L-methionine = N(1)-methylguanosine(37) in tRNA + S-adenosyl-L-homocysteine + H(+). Functionally, specifically methylates guanosine-37 in various tRNAs. This is tRNA (guanine-N(1)-)-methyltransferase from Coxiella burnetii (strain RSA 493 / Nine Mile phase I).